A 126-amino-acid chain; its full sequence is MAIRIVGVDLPQNKRGEIALTYVYGIGRSSSAKILDKAGVDRDVKVKDWTDDQAAKIREIIGAEYKVEGDLRSEVQLNIKRLMDIGCYRGVRHRIGLPVRGQSTKNNARTRKGRKKTVANKKKATK.

Residues proline 98 to lysine 126 are disordered. Positions alanine 108–lysine 126 are enriched in basic residues.

Belongs to the universal ribosomal protein uS13 family. Part of the 30S ribosomal subunit. Forms a loose heterodimer with protein S19. Forms two bridges to the 50S subunit in the 70S ribosome.

Its function is as follows. Located at the top of the head of the 30S subunit, it contacts several helices of the 16S rRNA. In the 70S ribosome it contacts the 23S rRNA (bridge B1a) and protein L5 of the 50S subunit (bridge B1b), connecting the 2 subunits; these bridges are implicated in subunit movement. Contacts the tRNAs in the A and P-sites. The chain is Small ribosomal subunit protein uS13 from Phocaeicola vulgatus (strain ATCC 8482 / DSM 1447 / JCM 5826 / CCUG 4940 / NBRC 14291 / NCTC 11154) (Bacteroides vulgatus).